A 104-amino-acid chain; its full sequence is Meiotically up-regulated gene 150 protein (104 aa).

The next 3 helical transmembrane spans lie at 30–50, 54–74, and 84–104; these read FFLKNIIVLSNYLYLLYKAWI, TISLCCDFPLFNFLFIAIPYF, and LLWFLFVSLCFITLSFQSLEI.

It is found in the endoplasmic reticulum membrane. Functionally, has a role in meiosis. The protein is Meiotically up-regulated gene 150 protein (mug150) of Schizosaccharomyces pombe (strain 972 / ATCC 24843) (Fission yeast).